Reading from the N-terminus, the 71-residue chain is Sec-independent protein translocase protein TatA (71 aa).

A helical transmembrane segment spans residues 1–21 (MGSFSLLHWLVVLVIVLLVFG). A disordered region spans residues 43–71 (LREDDKPTDQLGSTSQSTASGPQQDHGKH). Residues 52–65 (QLGSTSQSTASGPQ) are compositionally biased toward polar residues.

It belongs to the TatA/E family. In terms of assembly, the Tat system comprises two distinct complexes: a TatABC complex, containing multiple copies of TatA, TatB and TatC subunits, and a separate TatA complex, containing only TatA subunits. Substrates initially bind to the TatABC complex, which probably triggers association of the separate TatA complex to form the active translocon.

It localises to the cell inner membrane. Functionally, part of the twin-arginine translocation (Tat) system that transports large folded proteins containing a characteristic twin-arginine motif in their signal peptide across membranes. TatA could form the protein-conducting channel of the Tat system. This is Sec-independent protein translocase protein TatA from Xylella fastidiosa (strain 9a5c).